We begin with the raw amino-acid sequence, 345 residues long: MADRRRTDDNKGAREVVLLLNIGSPDSPEVKDVARYLNSFLTDRRIITLPFLLRQLLVRGIITPFRKKSSAQKYRTVWDESTRSFPLISHTKAIARALAHTGRDVHVAMRYGKPTVADVLKELPHGRSLVVLPLFPHYAMSSYETAVEHCKAEIRRLCPNLSFRVVQPFYAHEAYIRVLADNIRPYLTKPFDKLILSYHGIPRDHLDKTTRQALDLRHPEGCCTEEDPTANVCYRYQTYRTTALIREALCLAEEQVEQVFQSRVGHTEWLRPYLIERLSAWPQEETKRILIACPSFVCDCLESLEEVADHGQSIFKKAGGADFTYIPCLNSGANWIDALRNILEE.

Residues His-199 and Glu-302 each coordinate Fe cation.

It belongs to the ferrochelatase family.

It is found in the cytoplasm. It catalyses the reaction heme b + 2 H(+) = protoporphyrin IX + Fe(2+). It participates in porphyrin-containing compound metabolism; protoheme biosynthesis; protoheme from protoporphyrin-IX: step 1/1. Functionally, catalyzes the ferrous insertion into protoporphyrin IX. This is Ferrochelatase from Porphyromonas gingivalis (strain ATCC 33277 / DSM 20709 / CIP 103683 / JCM 12257 / NCTC 11834 / 2561).